The primary structure comprises 432 residues: Glutamyl-tRNA reductase (432 aa).

Substrate contacts are provided by residues 49-52 (TCNR), S101, 106-108 (ESQ), and Q112. The active-site Nucleophile is C50. 181 to 186 (GTGETI) contacts NADP(+).

Belongs to the glutamyl-tRNA reductase family. Homodimer.

The enzyme catalyses (S)-4-amino-5-oxopentanoate + tRNA(Glu) + NADP(+) = L-glutamyl-tRNA(Glu) + NADPH + H(+). It functions in the pathway porphyrin-containing compound metabolism; protoporphyrin-IX biosynthesis; 5-aminolevulinate from L-glutamyl-tRNA(Glu): step 1/2. Catalyzes the NADPH-dependent reduction of glutamyl-tRNA(Glu) to glutamate 1-semialdehyde (GSA). The chain is Glutamyl-tRNA reductase from Xylella fastidiosa (strain M12).